Here is a 276-residue protein sequence, read N- to C-terminus: Probable endonuclease LCL3 (276 aa).

The chain crosses the membrane as a helical span at residues 17-37; the sequence is FNVVILSIFFSGSFIGAWAFF. Positions 58–263 constitute a TNase-like domain; the sequence is RWLFGKVTAV…KARRRGIWSQ (206 aa). The active site involves Arg154. Asp159 contributes to the Ca(2+) binding site. Catalysis depends on residues Glu162 and Arg202.

This sequence belongs to the LCL3 family.

The protein resides in the mitochondrion. The protein localises to the membrane. This chain is Probable endonuclease LCL3 (LCL3), found in Zygosaccharomyces rouxii (strain ATCC 2623 / CBS 732 / NBRC 1130 / NCYC 568 / NRRL Y-229).